Here is a 234-residue protein sequence, read N- to C-terminus: Sugar fermentation stimulation protein homolog (234 aa).

This sequence belongs to the SfsA family.

This Shewanella halifaxensis (strain HAW-EB4) protein is Sugar fermentation stimulation protein homolog.